Consider the following 476-residue polypeptide: Proline--tRNA ligase 2 (476 aa).

It belongs to the class-II aminoacyl-tRNA synthetase family. ProS type 3 subfamily. As to quaternary structure, homodimer.

It is found in the cytoplasm. It catalyses the reaction tRNA(Pro) + L-proline + ATP = L-prolyl-tRNA(Pro) + AMP + diphosphate. Catalyzes the attachment of proline to tRNA(Pro) in a two-step reaction: proline is first activated by ATP to form Pro-AMP and then transferred to the acceptor end of tRNA(Pro). The polypeptide is Proline--tRNA ligase 2 (Bacillus thuringiensis subsp. konkukian (strain 97-27)).